A 232-amino-acid polypeptide reads, in one-letter code: Probable GTP-binding protein EngB (232 aa).

In terms of domain architecture, EngB-type G spans 13–188; it reads IGLEVAFAGR…AGVMGNWYEY (176 aa). GTP-binding positions include 21-28, 48-52, 67-70, 134-137, and 167-169; these read GRSNAGKS, GRTQM, DLPG, TKAD, and FSA. Mg(2+)-binding residues include Ser-28 and Thr-50.

Belongs to the TRAFAC class TrmE-Era-EngA-EngB-Septin-like GTPase superfamily. EngB GTPase family. Mg(2+) serves as cofactor.

Functionally, necessary for normal cell division and for the maintenance of normal septation. In Psychrobacter arcticus (strain DSM 17307 / VKM B-2377 / 273-4), this protein is Probable GTP-binding protein EngB.